The sequence spans 156 residues: Ribosomal RNA large subunit methyltransferase H (156 aa).

S-adenosyl-L-methionine contacts are provided by residues Leu-73, Gly-104, and Leu-123–Leu-128.

This sequence belongs to the RNA methyltransferase RlmH family. As to quaternary structure, homodimer.

It localises to the cytoplasm. It catalyses the reaction pseudouridine(1915) in 23S rRNA + S-adenosyl-L-methionine = N(3)-methylpseudouridine(1915) in 23S rRNA + S-adenosyl-L-homocysteine + H(+). In terms of biological role, specifically methylates the pseudouridine at position 1915 (m3Psi1915) in 23S rRNA. The sequence is that of Ribosomal RNA large subunit methyltransferase H from Methylibium petroleiphilum (strain ATCC BAA-1232 / LMG 22953 / PM1).